Here is a 76-residue protein sequence, read N- to C-terminus: Large ribosomal subunit protein bL31 (76 aa).

Belongs to the bacterial ribosomal protein bL31 family. Type A subfamily. As to quaternary structure, part of the 50S ribosomal subunit.

Its function is as follows. Binds the 23S rRNA. This is Large ribosomal subunit protein bL31 from Methylocella silvestris (strain DSM 15510 / CIP 108128 / LMG 27833 / NCIMB 13906 / BL2).